A 568-amino-acid chain; its full sequence is MKKPIITFNNFSFQYHSQSEPTLKGIQLTIYEGEKVLIVGPSGSGKSTLAQCINGLIPNIYEGEIQGTATVAGKNIQETSLFDLSFDVGTVLQDTDGQFIGLTVAEDIAFALENDAVEQAEMKKAVQKWSEIVELNQLLQHRPQDLSGGQKQRVSMAGVLINQSKILLFDEPLANLDPRAGQETMTLIDTIQQETKATVLIIEHRLEDVLCESVDRIIVMNEGTIISDTTPDELLRQDTLTQQGIREPLYVTAMKYAGIDLTQVSHLDKLAEVSGETVLPKMTQWSVQPSSVSAVKGAELLRLEQVSYQYDRHGEKVLDDFSVTIHHGEMISIVGKNGAGKSTLSKIICGFITPQSGKILWEGQDFSNYSIKERADKIGYVMQNPNQMISKKMIFEEVALGLVLRDVPQAEIEERVTNILHICGLYPFRNWPISALSFGQKKRVTIASILVLEPELLILDEPTAGQDFKHYTEMMTFLEELNRLGVTILMITHDMHLMLEYTTRALVVCDGRLLADATPVAVLTDEKLIQAASLKETSLFTFAKALGLENPLLFTEKFVAYDREVRFG.

2 ABC transporter domains span residues 6–247 and 301–535; these read ITFN…GIRE and LRLE…ASLK. Residues 40–47 and 335–342 each bind ATP; these read GPSGSGKS and GKNGAGKS.

Belongs to the ABC transporter superfamily.

The protein resides in the cell membrane. Probably part of an ABC transporter complex. Responsible for energy coupling to the transport system. In Enterococcus faecalis (strain ATCC 700802 / V583), this protein is Putative ABC transporter ATP-binding protein EF_2153.